Here is a 509-residue protein sequence, read N- to C-terminus: Fumarate hydratase, mitochondrial (509 aa).

Residues 1–43 (MYRSARSLHRFSASLSDLRAAQRSIKARNVCPAPGLRHQTVRM) constitute a mitochondrion transit peptide. Substrate-binding positions include 144 to 146 (SGT), 175 to 178 (HPND), 185 to 187 (SSN), and Thr233. His234 acts as the Proton donor/acceptor in catalysis. The active site involves Ser364. Substrate contacts are provided by residues Ser365 and 370-372 (KVN).

It belongs to the class-II fumarase/aspartase family. Fumarase subfamily. Homotetramer.

Its subcellular location is the mitochondrion. It is found in the cytoplasm. The protein resides in the cytosol. The protein localises to the nucleus. It localises to the chromosome. The enzyme catalyses (S)-malate = fumarate + H2O. It participates in carbohydrate metabolism; tricarboxylic acid cycle; (S)-malate from fumarate: step 1/1. Its function is as follows. Catalyzes the reversible stereospecific interconversion of fumarate to L-malate. Experiments in other species have demonstrated that specific isoforms of this protein act in defined pathways and favor one direction over the other. Catalyzes the hydration of fumarate to L-malate in the tricarboxylic acid (TCA) cycle to facilitate a transition step in the production of energy in the form of NADH. In terms of biological role, catalyzes the dehydration of L-malate to fumarate. Fumarate metabolism in the cytosol plays a role during urea cycle and arginine metabolism; fumarate being a by-product of the urea cycle and amino-acid catabolism. Also plays a role in DNA repair by promoting non-homologous end-joining (NHEJ). In response to DNA damage translocates to the nucleus and accumulates at DNA double-strand breaks (DSBs): acts by catalyzing formation of fumarate. The chain is Fumarate hydratase, mitochondrial from Danio rerio (Zebrafish).